The primary structure comprises 817 residues: Protein kintoun (817 aa).

Disordered regions lie at residues 233 to 259, 385 to 404, 410 to 445, and 473 to 503; these read AESTARSPASPAPKAVQRPEPTEPRCS, AGAREESADSSGADHGRKSC, AGTAKAEGELVPEPEQDFGGDSVTPLGPGEGTTPEN, and VQTSEEQEGTCHDTSGSDMGGPGTESIKPLC. A compositionally biased stretch (basic and acidic residues) spans 386-401; sequence GAREESADSSGADHGR. 2 positions are modified to phosphoserine: Ser-622 and Ser-631. The tract at residues 653–692 is disordered; the sequence is ECSDPDGLQGKEKGVKEECPLSEKENTEHSTTSTADSNSS. Over residues 661 to 680 the composition is skewed to basic and acidic residues; sequence QGKEKGVKEECPLSEKENTE. Polar residues predominate over residues 681-692; sequence HSTTSTADSNSS.

Belongs to the PIH1 family. Kintoun subfamily. As to quaternary structure, interacts with CFAP300. Interacts with DNAI2 and HSPA1A. Interacts with DNAAF4. Interacts with DNAAF6/PIH1D3.

The protein resides in the cytoplasm. It is found in the dynein axonemal particle. In terms of biological role, required for cytoplasmic pre-assembly of axonemal dyneins, thereby playing a central role in motility in cilia and flagella. Involved in pre-assembly of dynein arm complexes in the cytoplasm before intraflagellar transport loads them for the ciliary compartment. This chain is Protein kintoun, found in Rattus norvegicus (Rat).